The chain runs to 318 residues: Thymidylate synthase (318 aa).

DUMP-binding positions include arginine 25 and 180–181 (RR). The Nucleophile role is filled by cysteine 200. Residues 220-223 (RSGD), asparagine 231, and 261-263 (HIY) contribute to the dUMP site. Aspartate 223 is a (6R)-5,10-methylene-5,6,7,8-tetrahydrofolate binding site. Alanine 317 provides a ligand contact to (6R)-5,10-methylene-5,6,7,8-tetrahydrofolate.

Belongs to the thymidylate synthase family. Bacterial-type ThyA subfamily. As to quaternary structure, homodimer.

It is found in the cytoplasm. The catalysed reaction is dUMP + (6R)-5,10-methylene-5,6,7,8-tetrahydrofolate = 7,8-dihydrofolate + dTMP. It functions in the pathway pyrimidine metabolism; dTTP biosynthesis. Its function is as follows. Catalyzes the reductive methylation of 2'-deoxyuridine-5'-monophosphate (dUMP) to 2'-deoxythymidine-5'-monophosphate (dTMP) while utilizing 5,10-methylenetetrahydrofolate (mTHF) as the methyl donor and reductant in the reaction, yielding dihydrofolate (DHF) as a by-product. This enzymatic reaction provides an intracellular de novo source of dTMP, an essential precursor for DNA biosynthesis. This is Thymidylate synthase from Bacillus cytotoxicus (strain DSM 22905 / CIP 110041 / 391-98 / NVH 391-98).